Here is a 73-residue protein sequence, read N- to C-terminus: Putative neurotoxin NaH-Cpp1a (73 aa).

The first 23 residues, 1-23 (MKSFYGILCVAVLMMFHLEMSES), serve as a signal peptide directing secretion. Cystine bridges form between cysteine 43–cysteine 58, cysteine 50–cysteine 63, and cysteine 57–cysteine 70.

As to expression, expressed outside of acontia.

The protein resides in the secreted. It localises to the nematocyst. In terms of biological role, putative neurotoxin. This Calliactis polypus (Hermit crab anemone) protein is Putative neurotoxin NaH-Cpp1a.